The chain runs to 423 residues: Serine hydroxymethyltransferase (423 aa).

Residues leucine 120 and 124-126 (GHL) each bind (6S)-5,6,7,8-tetrahydrofolate. At lysine 229 the chain carries N6-(pyridoxal phosphate)lysine. Residues glutamate 245 and 353–355 (SPF) contribute to the (6S)-5,6,7,8-tetrahydrofolate site.

The protein belongs to the SHMT family. Homodimer. Requires pyridoxal 5'-phosphate as cofactor.

It is found in the cytoplasm. It carries out the reaction (6R)-5,10-methylene-5,6,7,8-tetrahydrofolate + glycine + H2O = (6S)-5,6,7,8-tetrahydrofolate + L-serine. It participates in one-carbon metabolism; tetrahydrofolate interconversion. It functions in the pathway amino-acid biosynthesis; glycine biosynthesis; glycine from L-serine: step 1/1. Its function is as follows. Catalyzes the reversible interconversion of serine and glycine with tetrahydrofolate (THF) serving as the one-carbon carrier. This reaction serves as the major source of one-carbon groups required for the biosynthesis of purines, thymidylate, methionine, and other important biomolecules. Also exhibits THF-independent aldolase activity toward beta-hydroxyamino acids, producing glycine and aldehydes, via a retro-aldol mechanism. The sequence is that of Serine hydroxymethyltransferase from Prochlorococcus marinus (strain MIT 9312).